We begin with the raw amino-acid sequence, 235 residues long: Serine protease SplA (235 aa).

Positions Met-1–Ala-35 are cleaved as a signal peptide. Active-site charge relay system residues include His-74, Asp-113, and Ser-189.

This sequence belongs to the peptidase S1B family.

The protein localises to the secreted. This Staphylococcus aureus (strain MSSA476) protein is Serine protease SplA (splA).